A 234-amino-acid chain; its full sequence is Segregation and condensation protein A (234 aa).

This sequence belongs to the ScpA family. In terms of assembly, component of a cohesin-like complex composed of ScpA, ScpB and the Smc homodimer, in which ScpA and ScpB bind to the head domain of Smc. The presence of the three proteins is required for the association of the complex with DNA.

The protein resides in the cytoplasm. Participates in chromosomal partition during cell division. May act via the formation of a condensin-like complex containing Smc and ScpB that pull DNA away from mid-cell into both cell halves. This is Segregation and condensation protein A from Streptococcus pyogenes serotype M3 (strain ATCC BAA-595 / MGAS315).